The primary structure comprises 197 residues: ATP-dependent Clp protease proteolytic subunit (197 aa).

Residue serine 102 is the Nucleophile of the active site. Histidine 127 is a catalytic residue.

It belongs to the peptidase S14 family. In terms of assembly, fourteen ClpP subunits assemble into 2 heptameric rings which stack back to back to give a disk-like structure with a central cavity, resembling the structure of eukaryotic proteasomes.

It localises to the cytoplasm. The catalysed reaction is Hydrolysis of proteins to small peptides in the presence of ATP and magnesium. alpha-casein is the usual test substrate. In the absence of ATP, only oligopeptides shorter than five residues are hydrolyzed (such as succinyl-Leu-Tyr-|-NHMec, and Leu-Tyr-Leu-|-Tyr-Trp, in which cleavage of the -Tyr-|-Leu- and -Tyr-|-Trp bonds also occurs).. In terms of biological role, cleaves peptides in various proteins in a process that requires ATP hydrolysis. Has a chymotrypsin-like activity. Plays a major role in the degradation of misfolded proteins. This chain is ATP-dependent Clp protease proteolytic subunit, found in Borreliella afzelii (strain PKo) (Borrelia afzelii).